Here is a 387-residue protein sequence, read N- to C-terminus: ATP phosphoribosyltransferase regulatory subunit (387 aa).

It belongs to the class-II aminoacyl-tRNA synthetase family. HisZ subfamily. As to quaternary structure, heteromultimer composed of HisG and HisZ subunits.

It localises to the cytoplasm. It functions in the pathway amino-acid biosynthesis; L-histidine biosynthesis; L-histidine from 5-phospho-alpha-D-ribose 1-diphosphate: step 1/9. Its function is as follows. Required for the first step of histidine biosynthesis. May allow the feedback regulation of ATP phosphoribosyltransferase activity by histidine. This chain is ATP phosphoribosyltransferase regulatory subunit, found in Psychrobacter cryohalolentis (strain ATCC BAA-1226 / DSM 17306 / VKM B-2378 / K5).